The chain runs to 755 residues: Subtilisin-like protease 4 (755 aa).

The N-terminal stretch at Met-1–Ala-20 is a signal peptide. An Inhibitor I9 domain is found at Tyr-41–His-119. The Peptidase S8 domain maps to Phe-128 to Asn-611. The Charge relay system role is filled by Asp-153. A glycan (N-linked (GlcNAc...) asparagine) is linked at Asn-182. His-217 serves as the catalytic Charge relay system. Residues Asn-297, Asn-325, Asn-393, Asn-468, and Asn-529 are each glycosylated (N-linked (GlcNAc...) asparagine). The PA domain maps to Pro-376–Ile-461. Residue Ser-544 is the Charge relay system of the active site. Asn-706 and Asn-727 each carry an N-linked (GlcNAc...) asparagine glycan.

The protein belongs to the peptidase S8 family.

It is found in the secreted. The protein resides in the extracellular space. It localises to the apoplast. Functionally, required for arbuscular mycorrhiza (AM) development during AM symbiosis with AM fungi (e.g. Glomeromycota intraradices). This is Subtilisin-like protease 4 from Lotus japonicus (Lotus corniculatus var. japonicus).